The sequence spans 347 residues: Transcription factor EC (347 aa).

The interval 1–119 (MTLDHQIINP…GLTSASCPSS (119 aa)) is necessary for transcriptional transactivation. The region spanning 139-192 (QKKDNHNLIERRRRYNINYRIKELGTLIPKSNDPDMRWNKGTILKASVEYIKWL) is the bHLH domain. Positions 271–347 (PSPELCDQAI…SFSSDDGDEL (77 aa)) are necessary for transcriptional transactivation. The disordered stretch occupies residues 319–347 (DPLLSATSPAVSKESSRRSSFSSDDGDEL). Residues 326–341 (SPAVSKESSRRSSFSS) are compositionally biased toward low complexity.

The protein belongs to the MiT/TFE family. As to quaternary structure, homodimer. Forms heterodimers with TFE3. Forms heterodimers with MITF. Interacts with MITF. As to expression, expressed moderately in spleen, kidney, bone marrow, small intestine and leukocytes. Expressed weakly in testis, trachea and colon.

The protein localises to the nucleus. Functionally, transcriptional regulator that acts as a repressor or an activator. Acts as a transcriptional repressor on minimal promoter containing element F (that includes an E-box sequence). Binds to element F in an E-box sequence-specific manner. Acts as a transcriptional transactivator on the proximal promoter region of the tartrate-resistant acid phosphatase (TRAP) E-box containing promoter. Collaborates with MITF in target gene activation. Acts as a transcriptional repressor on minimal promoter containing mu E3 enhancer sequence. Binds to mu E3 DNA sequence of the immunoglobulin heavy-chain gene enhancer. Binds DNA in a homo- or heterodimeric form. This is Transcription factor EC (TFEC) from Homo sapiens (Human).